The chain runs to 216 residues: Ras-related protein RABE1a (216 aa).

Residue 22 to 29 (GDSGVGKS) participates in GTP binding. Positions 44–52 (FITTIGIDF) match the Effector region motif. Residues 70–74 (DTAGQ), 128–131 (NKAD), and 159–160 (SA) contribute to the GTP site. The tract at residues 185 to 216 (DARAEPQTIKINQSDQGAGTSQATQKSACCGT) is disordered. Positions 193 to 216 (IKINQSDQGAGTSQATQKSACCGT) are enriched in polar residues. 2 S-geranylgeranyl cysteine lipidation sites follow: Cys-213 and Cys-214.

Belongs to the small GTPase superfamily. Rab family. As to quaternary structure, interacts with PI5K2.

It localises to the golgi apparatus membrane. Its subcellular location is the cell membrane. Involved in membrane trafficking from the Golgi to the plasma membrane. The protein is Ras-related protein RABE1a (RABE1A) of Arabidopsis thaliana (Mouse-ear cress).